The following is a 450-amino-acid chain: Proline--tRNA ligase (450 aa).

Belongs to the class-II aminoacyl-tRNA synthetase family. ProS type 2 subfamily. As to quaternary structure, homodimer.

It localises to the cytoplasm. The catalysed reaction is tRNA(Pro) + L-proline + ATP = L-prolyl-tRNA(Pro) + AMP + diphosphate. Its function is as follows. Catalyzes the attachment of proline to tRNA(Pro) in a two-step reaction: proline is first activated by ATP to form Pro-AMP and then transferred to the acceptor end of tRNA(Pro). In Paracoccus denitrificans (strain Pd 1222), this protein is Proline--tRNA ligase.